The sequence spans 644 residues: MAKIIGIDLGTTNSCVAVMEGDKPKVIENSEGHRTTPSIVAFTDDNEILVGQSAKRQSVTNPEKTLFAIKRLIGRRFDDPIVQKDIKMVPYKIMKADNGDAWVRVKDQDKAPPQISAEVLRKMKKTAEDYLGEEVKEAVITVPAYFNDSQRQATKDAGRIAGLEVKRIINEPTAAALAYGMDKKRGDSVIAVYDLGGGTFDISIIEIAEVDGEHQFEVLATNGDTFLGGEDFDLALIEYLASEFKKDTGIDLHNDPLALQRLKEAAEKAKIELSSAQQTDVNLPYITADASGPKHLNIKLTRAKLESLVEKLVERTIEPCKTALKDAGLTVSQINEVILVGGQTRMPLVQKTVEEFFGKEPRKDVNPDEAVAVGAAIQAAVLSGEVKDILLLDVTPLSLGIETMGGVMTKLIEKNTTIPTKATQVFSTADDNQTAVTVHVLQGEREQASANKSLGRFDLRDIPPAPRGVPQIEVTFDIDANGILNVSAKDKATGKAQSIVIKASSGLSEEEVAAMVKDAQSHAEEDKKFKEMAELRNQADSLIHSCEKSMKDLADELSEDEKKGIETAISELKEAVQGTDKARIEDKLKVLTDASAKMAERIYAKKSSEGQAAQGQTQSQESTKPAEEGVVDAEFEEVKEEDKK.

Phosphothreonine; by autocatalysis is present on Thr199. The tract at residues 603 to 644 is disordered; that stretch reads YAKKSSEGQAAQGQTQSQESTKPAEEGVVDAEFEEVKEEDKK. Residues 609-623 show a composition bias toward polar residues; that stretch reads EGQAAQGQTQSQEST. Acidic residues predominate over residues 629-644; it reads GVVDAEFEEVKEEDKK.

The protein belongs to the heat shock protein 70 family.

Acts as a chaperone. The protein is Chaperone protein DnaK of Legionella pneumophila (strain Corby).